Here is a 1233-residue protein sequence, read N- to C-terminus: Anion exchange protein 3 (1233 aa).

Pro residues predominate over residues 1–11 (MANGVIPPPGG). 2 disordered regions span residues 1–320 (MANG…RRPH) and 431–500 (DDKD…DGHR). Residues 1–709 (MANGVIPPPG…DLRDALHSQC (709 aa)) are Cytoplasmic-facing. Positions 58-73 (DPEKPSRSFSERDFAF) are enriched in basic and acidic residues. 2 stretches are compositionally biased toward basic residues: residues 74 to 97 (HRHISHHTHHPLSARLPPPHKLRR) and 104 to 113 (RHTRRKRKKE). Acidic residues predominate over residues 137-153 (GEEEEEEEEEGESETEA). Residues S168, S171, S176, and S199 each carry the phosphoserine modification. Residues 201–216 (QRSVSSSSPRARAPRV) are compositionally biased toward low complexity. Residues 268 to 290 (DDMKSHRLEDNPGVRRHLVKEPS) show a composition bias toward basic and acidic residues. R296 is modified (omega-N-methylarginine). Residues 437–450 (SFPRNPSSSSVNSV) show a composition bias toward low complexity. The span at 482–500 (HDPDAKERPLHMPGGDGHR) shows a compositional bias: basic and acidic residues. Helical transmembrane passes span 710-732 (VAAVLFIYFAALSPAITFGGLLG), 738-775 (LMGVSELIVSTAVLGVLFSLLGAQPLLVVGFSGPLLVF), 795-817 (VWVGLWLVVFVLALVGAEGTFLV), and 827-848 (IFAFLISLIFIYETFHKLYKVF). Residues 710-1233 (VAAVLFIYFA…DEYNELHMPV (524 aa)) form a membrane (anion exchange) region. The N-linked (GlcNAc...) asparagine glycan is linked to N874. Residues 894 to 911 (ALLSLILMLGTFLIAFFL) form a helical membrane-spanning segment. Residues 912 to 926 (RKFRNSRFLGGKARR) are Cytoplasmic-facing. 5 helical membrane-spanning segments follow: residues 927–947 (IIGDFGIPISILLMVLVDYSI), 981–1003 (PFPPWMMVAAAVPALLVLILIFM), 1029–1050 (LLLIGSLGGLCGLFGLPWLTAA), 1084–1129 (VTGV…IQLS), and 1156–1192 (MHLFTCIQLACIALLWVVKSTAASLAFPFLLLLTVPL). C1166 carries the S-palmitoyl cysteine lipid modification.

The protein belongs to the anion exchanger (TC 2.A.31) family.

Its subcellular location is the cell membrane. The enzyme catalyses hydrogencarbonate(in) + chloride(out) = hydrogencarbonate(out) + chloride(in). Sodium-independent anion exchanger which mediates the electroneutral exchange of chloride for bicarbonate ions across the cell membrane. May be involved in the regulation of intracellular pH, and the modulation of cardiac action potential. The sequence is that of Anion exchange protein 3 (SLC4A3) from Oryctolagus cuniculus (Rabbit).